A 523-amino-acid polypeptide reads, in one-letter code: Probable methylmalonate-semialdehyde/malonate-semialdehyde dehydrogenase [acylating], mitochondrial (523 aa).

The transit peptide at 1–22 (MLSRLARVQPKCQQLAHFSTSK) directs the protein to the mitochondrion. NAD(+) contacts are provided by F175, K199, and E202. Catalysis depends on C307, which acts as the Nucleophile. E407 lines the NAD(+) pocket.

It belongs to the aldehyde dehydrogenase family. Homodimer.

The protein resides in the mitochondrion. It carries out the reaction 2-methyl-3-oxopropanoate + NAD(+) + CoA + H2O = propanoyl-CoA + hydrogencarbonate + NADH + H(+). The catalysed reaction is 3-oxopropanoate + NAD(+) + CoA + H2O = hydrogencarbonate + acetyl-CoA + NADH + H(+). Its function is as follows. Probable malonate and methylmalonate semialdehyde dehydrogenase involved in the catabolism of valine, thymine, and compounds catabolized by way of beta-alanine, including uracil and cytidine. The polypeptide is Probable methylmalonate-semialdehyde/malonate-semialdehyde dehydrogenase [acylating], mitochondrial (alh-8) (Caenorhabditis elegans).